The chain runs to 87 residues: Putative defensin-like protein 304 (87 aa).

Positions 1-19 (MKSNKVTFFLGLFLVSAFC) are cleaved as a signal peptide. Disulfide bonds link C27/C46, C33/C51, and C40/C53.

It belongs to the DEFL family.

The protein resides in the secreted. This chain is Putative defensin-like protein 304, found in Arabidopsis thaliana (Mouse-ear cress).